The primary structure comprises 102 residues: MSREITFFSRFEQDILAGRKTITIRDASESHFQPGEVLRVSRNEDNVFFCQIEVLSVTPVRLDGLTEQHARQENMSLGELKQVIKEIYPGLDELFVITFAKR.

The 88-residue stretch at 6-93 folds into the ASCH domain; sequence TFFSRFEQDI…IKEIYPGLDE (88 aa). The active-site Proton acceptor is the lysine 20. Threonine 23 serves as the catalytic Nucleophile. Catalysis depends on glutamate 73, which acts as the Proton donor.

Belongs to the N(4)-acetylcytidine amidohydrolase family.

It catalyses the reaction N(4)-acetylcytidine + H2O = cytidine + acetate + H(+). It carries out the reaction N(4)-acetyl-2'-deoxycytidine + H2O = 2'-deoxycytidine + acetate + H(+). The catalysed reaction is N(4)-acetylcytosine + H2O = cytosine + acetate + H(+). Its function is as follows. Catalyzes the hydrolysis of N(4)-acetylcytidine (ac4C). The polypeptide is N(4)-acetylcytidine amidohydrolase (Serratia proteamaculans (strain 568)).